The sequence spans 255 residues: Putative esterase YitV (255 aa).

The polypeptide is Putative esterase YitV (yitV) (Bacillus subtilis (strain 168)).